Consider the following 160-residue polypeptide: Cytochrome c-type biogenesis protein CcmE (160 aa).

Residues 1–8 lie on the Cytoplasmic side of the membrane; that stretch reads MNPRRKQR. Residues 9–29 traverse the membrane as a helical; Signal-anchor for type II membrane protein segment; the sequence is LTWVAILVIGVSVATGLMLYA. Residues 30-160 lie on the Periplasmic side of the membrane; the sequence is LSQSIDLFYT…PNTVEKGEGQ (131 aa). Heme contacts are provided by histidine 130 and tyrosine 134.

The protein belongs to the CcmE/CycJ family.

The protein resides in the cell inner membrane. In terms of biological role, heme chaperone required for the biogenesis of c-type cytochromes. Transiently binds heme delivered by CcmC and transfers the heme to apo-cytochromes in a process facilitated by CcmF and CcmH. The chain is Cytochrome c-type biogenesis protein CcmE from Idiomarina loihiensis (strain ATCC BAA-735 / DSM 15497 / L2-TR).